The sequence spans 488 residues: UDP-N-acetylmuramate--L-alanine ligase (488 aa).

129-135 (GSHGKTT) is a binding site for ATP.

It belongs to the MurCDEF family.

Its subcellular location is the cytoplasm. The enzyme catalyses UDP-N-acetyl-alpha-D-muramate + L-alanine + ATP = UDP-N-acetyl-alpha-D-muramoyl-L-alanine + ADP + phosphate + H(+). It functions in the pathway cell wall biogenesis; peptidoglycan biosynthesis. Cell wall formation. This is UDP-N-acetylmuramate--L-alanine ligase from Prochlorococcus marinus (strain MIT 9303).